A 712-amino-acid chain; its full sequence is Polyphosphate kinase (712 aa).

Asparagine 49 lines the ATP pocket. Arginine 398 and arginine 428 together coordinate Mg(2+). Catalysis depends on histidine 458, which acts as the Phosphohistidine intermediate. ATP is bound by residues tyrosine 491, arginine 587, and histidine 615.

The protein belongs to the polyphosphate kinase 1 (PPK1) family. Mg(2+) is required as a cofactor. An intermediate of this reaction is the autophosphorylated ppk in which a phosphate is covalently linked to a histidine residue through a N-P bond.

It catalyses the reaction [phosphate](n) + ATP = [phosphate](n+1) + ADP. Catalyzes the reversible transfer of the terminal phosphate of ATP to form a long-chain polyphosphate (polyP). The chain is Polyphosphate kinase from Prochlorococcus marinus (strain MIT 9313).